The sequence spans 340 residues: Sulfotransferase ppzF (340 aa).

It functions in the pathway secondary metabolite biosynthesis. Sulfotransferase; part of the gene cluster that mediates the biosynthesis of pyrrolopyrazines, secondary metabolites showing insecticidal activity. The role of ppzF within the pathway has still to be determined. The single multifunctional NRPS ppzA is sufficient to produce peramine via condensation of 1-pyrroline-5-carboxylate and arginine, N-methylation of the alpha-amino group of arginine and reduction of the thioester and the cyclization to form an iminium ion resulting in release from the peptide synthetase. Deprotonation of this intermediate and oxidation of the pyrroline ring would give rise to peramine. In Epichloe species that produce only peramine, the peramine synthetase gene is not localized in a gene cluster, in contrast to Metarhizium species that contain additional pyrrolopyrazine biosynthesis genes. The 2-oxoglutarate-Fe(II) type oxidoreductase ppzC hydroxylates peramine to yield the newly identified compound 8-hydroxyperamine whereas ppzD converts L-proline into trans-4-hydroxy-L-proline, a precursor of peramine biosynthesis. This Metarhizium majus (strain ARSEF 297) protein is Sulfotransferase ppzF.